Reading from the N-terminus, the 162-residue chain is Phosphopantetheine adenylyltransferase (162 aa).

S9 serves as a coordination point for substrate. Residues 9–10 (SF) and H17 contribute to the ATP site. Residues K41, L73, and K87 each contribute to the substrate site. ATP is bound by residues 88 to 90 (GLR), E98, and 122 to 128 (YSFLSSS).

The protein belongs to the bacterial CoaD family. In terms of assembly, homohexamer. The cofactor is Mg(2+).

Its subcellular location is the cytoplasm. It carries out the reaction (R)-4'-phosphopantetheine + ATP + H(+) = 3'-dephospho-CoA + diphosphate. It participates in cofactor biosynthesis; coenzyme A biosynthesis; CoA from (R)-pantothenate: step 4/5. Its function is as follows. Reversibly transfers an adenylyl group from ATP to 4'-phosphopantetheine, yielding dephospho-CoA (dPCoA) and pyrophosphate. This is Phosphopantetheine adenylyltransferase from Salinispora tropica (strain ATCC BAA-916 / DSM 44818 / JCM 13857 / NBRC 105044 / CNB-440).